A 163-amino-acid chain; its full sequence is Protein-export protein SecB (163 aa).

It belongs to the SecB family. Homotetramer, a dimer of dimers. One homotetramer interacts with 1 SecA dimer.

The protein resides in the cytoplasm. In terms of biological role, one of the proteins required for the normal export of preproteins out of the cell cytoplasm. It is a molecular chaperone that binds to a subset of precursor proteins, maintaining them in a translocation-competent state. It also specifically binds to its receptor SecA. The protein is Protein-export protein SecB of Azotobacter vinelandii (strain DJ / ATCC BAA-1303).